A 155-amino-acid polypeptide reads, in one-letter code: Putative ATP synthase protein YMF19-like protein (155 aa).

Transmembrane regions (helical) follow at residues 23–43 (FLWLCLFYITFYFVLYSVLVF), 89–109 (WRALILAYLTSIYFFPILGSF), and 117–137 (VDFGYIPTVCILLYVIFLFFF).

Belongs to the ATPase protein YMF19 family.

It localises to the mitochondrion membrane. The sequence is that of Putative ATP synthase protein YMF19-like protein (YMF18) from Marchantia polymorpha (Common liverwort).